Here is a 34-residue protein sequence, read N- to C-terminus: Tau-theraphotoxin-Pc1c (34 aa).

Cystine bridges form between Cys-2–Cys-16, Cys-9–Cys-21, and Cys-15–Cys-28. Phe-34 carries the post-translational modification Phenylalanine amide.

This sequence belongs to the neurotoxin 10 (Hwtx-1) family. 62 (Vatx) subfamily. As to expression, expressed by the venom gland.

It is found in the secreted. Functionally, selectively activates mammalian TRPV1, or capsaicin receptor, a non-selective cation channel expressed by sensory neurons of the pain pathway. Is more potent than VaTx1 and VaTx2. Interacts with distinct regions of the channel than capsaicin, since it only acts on the extracellular face of the channel, and capsaicin binds to the cytosolic side. Also activates avian TRPV1, which is insensitive to capsaicin. In mice, elicits pain-related behaviors, such as licking and flinching of the affected limb. The paw of toxin-injected mice shows substantial edema. In Psalmopoeus cambridgei (Trinidad chevron tarantula), this protein is Tau-theraphotoxin-Pc1c.